Here is a 258-residue protein sequence, read N- to C-terminus: Ditrans,polycis-undecaprenyl-diphosphate synthase ((2E,6E)-farnesyl-diphosphate specific) (258 aa).

Residue Asp-24 is part of the active site. Position 24 (Asp-24) interacts with Mg(2+). Residues 25–28 (GNGR), Trp-29, Arg-37, His-41, and 69–71 (SSE) contribute to the substrate site. Asn-72 (proton acceptor) is an active-site residue. Substrate contacts are provided by residues Trp-73, Arg-75, Arg-192, and 198–200 (RIS). Glu-211 is a binding site for Mg(2+).

Belongs to the UPP synthase family. In terms of assembly, homodimer. The cofactor is Mg(2+).

It catalyses the reaction 8 isopentenyl diphosphate + (2E,6E)-farnesyl diphosphate = di-trans,octa-cis-undecaprenyl diphosphate + 8 diphosphate. In terms of biological role, catalyzes the sequential condensation of isopentenyl diphosphate (IPP) with (2E,6E)-farnesyl diphosphate (E,E-FPP) to yield (2Z,6Z,10Z,14Z,18Z,22Z,26Z,30Z,34E,38E)-undecaprenyl diphosphate (di-trans,octa-cis-UPP). UPP is the precursor of glycosyl carrier lipid in the biosynthesis of bacterial cell wall polysaccharide components such as peptidoglycan and lipopolysaccharide. The chain is Ditrans,polycis-undecaprenyl-diphosphate synthase ((2E,6E)-farnesyl-diphosphate specific) from Xanthomonas oryzae pv. oryzae (strain KACC10331 / KXO85).